A 156-amino-acid chain; its full sequence is Oxidized purine nucleoside triphosphate hydrolase (156 aa).

Positions 3-132 (TSKLLTLVLV…WFPLMLQKKR (130 aa)) constitute a Nudix hydrolase domain. A 2-oxo-dATP-binding site is contributed by T8. Residues T8, K23, N33, and 35-38 (FGGK) each bind O(6)-methyl-dGMP. K23 provides a ligand contact to 8-oxo-dGTP. 2-oxo-dATP-binding positions include N33 and 35–38 (FGGK). Residues G36, E52, E55, E56, and E100 each coordinate Mg(2+). Positions 37 to 58 (GKVQTGETIEQAARRELLEESG) match the Nudix box motif. 117 to 120 (WADD) is a binding site for 2-oxo-dATP. 117–120 (WADD) provides a ligand contact to O(6)-methyl-dGMP.

This sequence belongs to the Nudix hydrolase family. As to quaternary structure, monomer. Mg(2+) serves as cofactor.

It is found in the cytoplasm. The protein localises to the cytosol. It localises to the mitochondrion matrix. The protein resides in the nucleus. The catalysed reaction is 2-oxo-dATP + H2O = 2-oxo-dAMP + diphosphate + H(+). It carries out the reaction 2-oxo-ATP + H2O = 2-oxo-AMP + diphosphate + H(+). The enzyme catalyses 8-oxo-dGTP + H2O = 8-oxo-dGMP + diphosphate + H(+). It catalyses the reaction 8-oxo-dATP + H2O = 8-oxo-dAMP + diphosphate + H(+). The catalysed reaction is O(6)-methyl-dGTP + H2O = O(6)-methyl-dGMP + diphosphate + H(+). It carries out the reaction N(6)-methyl-dATP + H2O = N(6)-methyl-dAMP + diphosphate + H(+). The enzyme catalyses N(6)-methyl-ATP + H2O = N(6)-methyl-AMP + diphosphate + H(+). Its activity is regulated as follows. Inhibited by TH588. Its function is as follows. Oxidized purine nucleoside triphosphate hydrolase which is a prominent sanitizer of the oxidized nucleotide pool. Catalyzes the hydrolysis of 2-oxo-dATP (2-hydroxy-dATP) into 2-oxo-dAMP. Also has a significant hydrolase activity toward 2-oxo-ATP, 8-oxo-dGTP and 8-oxo-dATP. Through the hydrolysis of oxidized purine nucleoside triphosphates, prevents their incorporation into DNA and the subsequent transversions A:T to C:G and G:C to T:A. Also catalyzes the hydrolysis of methylated purine nucleoside triphosphate preventing their integration into DNA. Through this antimutagenic activity protects cells from oxidative stress. The chain is Oxidized purine nucleoside triphosphate hydrolase (nudt1) from Danio rerio (Zebrafish).